The chain runs to 417 residues: NADH-quinone oxidoreductase subunit D (417 aa).

It belongs to the complex I 49 kDa subunit family. NDH-1 is composed of 14 different subunits. Subunits NuoB, C, D, E, F, and G constitute the peripheral sector of the complex.

It is found in the cell inner membrane. It carries out the reaction a quinone + NADH + 5 H(+)(in) = a quinol + NAD(+) + 4 H(+)(out). Functionally, NDH-1 shuttles electrons from NADH, via FMN and iron-sulfur (Fe-S) centers, to quinones in the respiratory chain. The immediate electron acceptor for the enzyme in this species is believed to be ubiquinone. Couples the redox reaction to proton translocation (for every two electrons transferred, four hydrogen ions are translocated across the cytoplasmic membrane), and thus conserves the redox energy in a proton gradient. In Francisella tularensis subsp. mediasiatica (strain FSC147), this protein is NADH-quinone oxidoreductase subunit D.